Here is a 108-residue protein sequence, read N- to C-terminus: ATP-dependent Clp protease adapter protein ClpS (108 aa).

This sequence belongs to the ClpS family. As to quaternary structure, binds to the N-terminal domain of the chaperone ClpA.

Functionally, involved in the modulation of the specificity of the ClpAP-mediated ATP-dependent protein degradation. In Mycobacterium leprae (strain TN), this protein is ATP-dependent Clp protease adapter protein ClpS.